The sequence spans 328 residues: Sterol demethylase protein B (328 aa).

It belongs to the NAD(P)-dependent epimerase/dehydratase family.

The enzyme catalyses a 3beta-hydroxy-4alpha-methylsteroid-4beta-carboxylate + NAD(+) = a 4alpha-methyl-3-oxosteroid + CO2 + NADH. It carries out the reaction a 3beta-hydroxy-4alpha-methylsteroid-4beta-carboxylate + NADP(+) = a 4alpha-methyl-3-oxosteroid + CO2 + NADPH. The catalysed reaction is 4beta-carboxy-4alpha-methyl-5alpha-cholesta-8,24-dien-3beta-ol + NAD(+) = 3-dehydro-4alpha-methylzymosterol + CO2 + NADH. It catalyses the reaction 4beta-carboxy-4alpha-methyl-5alpha-cholesta-8,24-dien-3beta-ol + NADP(+) = 3-dehydro-4alpha-methylzymosterol + CO2 + NADPH. The enzyme catalyses 3-dehydro-4alpha-methylzymosterol + NADPH + H(+) = 4alpha-methylzymosterol + NADP(+). Its pathway is steroid biosynthesis; sterol biosynthesis. Its function is as follows. Participates in the biosynthesis of bacterial sterols. Together with SdmA, removes one methyl group from the C-4 position of 4,4-dimethylated steroid molecules. SdmB catalyzes an oxidative decarboxylation that results in reduction of the 3beta-hydroxy group at the C-3 carbon to an oxo group. It also functions as a ketoreductase that converts the C-3 oxo group back to a hydroxyl group after C-4 demethylation. The chain is Sterol demethylase protein B from Methylococcus capsulatus (strain ATCC 33009 / NCIMB 11132 / Bath).